Consider the following 114-residue polypeptide: Small ribosomal subunit protein uS17 (114 aa).

It belongs to the universal ribosomal protein uS17 family. Part of the 30S ribosomal subunit.

In terms of biological role, one of the primary rRNA binding proteins, it binds specifically to the 5'-end of 16S ribosomal RNA. The sequence is that of Small ribosomal subunit protein uS17 from Aeropyrum pernix (strain ATCC 700893 / DSM 11879 / JCM 9820 / NBRC 100138 / K1).